The chain runs to 379 residues: Queuine tRNA-ribosyltransferase (379 aa).

The Proton acceptor role is filled by aspartate 94. Substrate-binding positions include 94 to 98 (DSGGF), aspartate 148, glutamine 191, and glycine 218. Residues 249 to 255 (GVGSPDS) form an RNA binding region. Aspartate 268 (nucleophile) is an active-site residue. Residues 273 to 277 (TRIGR) are RNA binding; important for wobble base 34 recognition. The Zn(2+) site is built by cysteine 306, cysteine 308, cysteine 311, and histidine 337.

This sequence belongs to the queuine tRNA-ribosyltransferase family. As to quaternary structure, homodimer. Within each dimer, one monomer is responsible for RNA recognition and catalysis, while the other monomer binds to the replacement base PreQ1. Requires Zn(2+) as cofactor.

It carries out the reaction 7-aminomethyl-7-carbaguanine + guanosine(34) in tRNA = 7-aminomethyl-7-carbaguanosine(34) in tRNA + guanine. It functions in the pathway tRNA modification; tRNA-queuosine biosynthesis. Catalyzes the base-exchange of a guanine (G) residue with the queuine precursor 7-aminomethyl-7-deazaguanine (PreQ1) at position 34 (anticodon wobble position) in tRNAs with GU(N) anticodons (tRNA-Asp, -Asn, -His and -Tyr). Catalysis occurs through a double-displacement mechanism. The nucleophile active site attacks the C1' of nucleotide 34 to detach the guanine base from the RNA, forming a covalent enzyme-RNA intermediate. The proton acceptor active site deprotonates the incoming PreQ1, allowing a nucleophilic attack on the C1' of the ribose to form the product. After dissociation, two additional enzymatic reactions on the tRNA convert PreQ1 to queuine (Q), resulting in the hypermodified nucleoside queuosine (7-(((4,5-cis-dihydroxy-2-cyclopenten-1-yl)amino)methyl)-7-deazaguanosine). In Anoxybacillus flavithermus (strain DSM 21510 / WK1), this protein is Queuine tRNA-ribosyltransferase.